A 238-amino-acid chain; its full sequence is Large ribosomal subunit protein uL2 (238 aa).

The span at 1–11 shows a compositional bias: polar residues; that stretch reads MGKRLISQNRG. 2 disordered regions span residues 1-22 and 202-223; these read MGKRLISQNRGRGTPTYRAPSH and FGGGAWKHPGKPTTVSRNAPPG.

This sequence belongs to the universal ribosomal protein uL2 family. In terms of assembly, part of the 50S ribosomal subunit. Forms a bridge to the 30S subunit in the 70S ribosome.

Functionally, one of the primary rRNA binding proteins. Required for association of the 30S and 50S subunits to form the 70S ribosome, for tRNA binding and peptide bond formation. It has been suggested to have peptidyltransferase activity; this is somewhat controversial. Makes several contacts with the 16S rRNA in the 70S ribosome. The polypeptide is Large ribosomal subunit protein uL2 (Methanosarcina mazei (strain ATCC BAA-159 / DSM 3647 / Goe1 / Go1 / JCM 11833 / OCM 88) (Methanosarcina frisia)).